Here is a 205-residue protein sequence, read N- to C-terminus: Protein-L-isoaspartate O-methyltransferase (205 aa).

The active site involves serine 56.

Belongs to the methyltransferase superfamily. L-isoaspartyl/D-aspartyl protein methyltransferase family.

The protein localises to the cytoplasm. The enzyme catalyses [protein]-L-isoaspartate + S-adenosyl-L-methionine = [protein]-L-isoaspartate alpha-methyl ester + S-adenosyl-L-homocysteine. In terms of biological role, catalyzes the methyl esterification of L-isoaspartyl residues in peptides and proteins that result from spontaneous decomposition of normal L-aspartyl and L-asparaginyl residues. It plays a role in the repair and/or degradation of damaged proteins. In Pyrobaculum arsenaticum (strain DSM 13514 / JCM 11321 / PZ6), this protein is Protein-L-isoaspartate O-methyltransferase.